Consider the following 232-residue polypeptide: Small ribosomal subunit protein uS2 (232 aa).

Belongs to the universal ribosomal protein uS2 family.

The polypeptide is Small ribosomal subunit protein uS2 (Pelotomaculum thermopropionicum (strain DSM 13744 / JCM 10971 / SI)).